The primary structure comprises 405 residues: Glyceraldehyde-3-phosphate dehydrogenase A, chloroplastic (405 aa).

The N-terminal 68 residues, 1-68 (MASATFSVAK…GHKKSLVVEA (68 aa)), are a transit peptide targeting the chloroplast. NADP(+)-binding positions include 80-81 (RI), aspartate 104, and arginine 149. Residues 221 to 223 (SCT), threonine 252, arginine 267, 280 to 281 (TG), and arginine 303 contribute to the D-glyceraldehyde 3-phosphate site. Cysteine 222 serves as the catalytic Nucleophile. Asparagine 385 contacts NADP(+).

The protein belongs to the glyceraldehyde-3-phosphate dehydrogenase family. In terms of assembly, tetramer of either four A chains (GAPDH 2) or two A and two B chains (GAPDH 1).

The protein resides in the plastid. The protein localises to the chloroplast. It catalyses the reaction D-glyceraldehyde 3-phosphate + phosphate + NADP(+) = (2R)-3-phospho-glyceroyl phosphate + NADPH + H(+). The protein operates within carbohydrate biosynthesis; Calvin cycle. In Pisum sativum (Garden pea), this protein is Glyceraldehyde-3-phosphate dehydrogenase A, chloroplastic (GAPA).